The sequence spans 483 residues: ATP synthase subunit beta (483 aa).

Residue 169 to 176 (GGAGVGKT) coordinates ATP.

This sequence belongs to the ATPase alpha/beta chains family. F-type ATPases have 2 components, CF(1) - the catalytic core - and CF(0) - the membrane proton channel. CF(1) has five subunits: alpha(3), beta(3), gamma(1), delta(1), epsilon(1). CF(0) has three main subunits: a(1), b(2) and c(9-12). The alpha and beta chains form an alternating ring which encloses part of the gamma chain. CF(1) is attached to CF(0) by a central stalk formed by the gamma and epsilon chains, while a peripheral stalk is formed by the delta and b chains.

The protein localises to the cell membrane. It catalyses the reaction ATP + H2O + 4 H(+)(in) = ADP + phosphate + 5 H(+)(out). Functionally, produces ATP from ADP in the presence of a proton gradient across the membrane. The catalytic sites are hosted primarily by the beta subunits. This is ATP synthase subunit beta from Corynebacterium glutamicum (strain R).